Here is a 473-residue protein sequence, read N- to C-terminus: Glutamate--tRNA ligase 1 (473 aa).

The 'HIGH' region signature appears at 10–20; sequence PSPTGFLHIGG. The 'KMSKS' region signature appears at 252 to 256; sequence KLSKR. Lys-255 contributes to the ATP binding site.

The protein belongs to the class-I aminoacyl-tRNA synthetase family. Glutamate--tRNA ligase type 1 subfamily. As to quaternary structure, monomer.

It localises to the cytoplasm. It carries out the reaction tRNA(Glu) + L-glutamate + ATP = L-glutamyl-tRNA(Glu) + AMP + diphosphate. Catalyzes the attachment of glutamate to tRNA(Glu) in a two-step reaction: glutamate is first activated by ATP to form Glu-AMP and then transferred to the acceptor end of tRNA(Glu). This chain is Glutamate--tRNA ligase 1, found in Wolbachia pipientis wMel.